The sequence spans 382 residues: Chorismate synthase (382 aa).

Positions 39 and 45 each coordinate NADP(+). Residues 89–113 (SPEPGGEPRKKALTDARPGHADLTG) are disordered. Residues 94–108 (GEPRKKALTDARPGH) show a composition bias toward basic and acidic residues. Residues 128–130 (RAS), 246–247 (QA), Ala-290, 305–309 (KPIAT), and Arg-331 each bind FMN.

This sequence belongs to the chorismate synthase family. As to quaternary structure, homotetramer. FMNH2 serves as cofactor.

The enzyme catalyses 5-O-(1-carboxyvinyl)-3-phosphoshikimate = chorismate + phosphate. Its pathway is metabolic intermediate biosynthesis; chorismate biosynthesis; chorismate from D-erythrose 4-phosphate and phosphoenolpyruvate: step 7/7. Its function is as follows. Catalyzes the anti-1,4-elimination of the C-3 phosphate and the C-6 proR hydrogen from 5-enolpyruvylshikimate-3-phosphate (EPSP) to yield chorismate, which is the branch point compound that serves as the starting substrate for the three terminal pathways of aromatic amino acid biosynthesis. This reaction introduces a second double bond into the aromatic ring system. This chain is Chorismate synthase, found in Deinococcus radiodurans (strain ATCC 13939 / DSM 20539 / JCM 16871 / CCUG 27074 / LMG 4051 / NBRC 15346 / NCIMB 9279 / VKM B-1422 / R1).